Consider the following 355-residue polypeptide: Blue-sensitive opsin (355 aa).

Over 1-41 the chain is Extracellular; the sequence is MKSRPQEFQEDFYIPIPLDTNNITALSPFLVPQDHLGGSGI. A glycan (N-linked (GlcNAc...) asparagine) is linked at N22. A helical membrane pass occupies residues 42 to 66; it reads FMIMTVFMLFLFIGGTSINVLTIVC. At 67–78 the chain is on the cytoplasmic side; that stretch reads TVQYKKLRSHLN. The helical transmembrane segment at 79 to 104 threads the bilayer; sequence YILVNLAISNLLVSTVGSFTAFVSFL. Residues 105–118 lie on the Extracellular side of the membrane; it reads NRYFIFGPTACKIE. C115 and C192 are joined by a disulfide. Residues 119 to 138 form a helical membrane-spanning segment; that stretch reads GFVATLGGMVSLWSLSVVAF. The Cytoplasmic portion of the chain corresponds to 139 to 157; it reads ERWLVICKPVGNFSFKGTH. Residues 158–181 traverse the membrane as a helical segment; that stretch reads AIIGCALTWFFALLASTPPLFGWS. The Extracellular portion of the chain corresponds to 182 to 207; sequence RYIPEGLQCSCGPDWYTTENKYNNES. N205 carries N-linked (GlcNAc...) asparagine glycosylation. Residues 208 to 235 form a helical membrane-spanning segment; that stretch reads YVMFLFCFCFGFPFTVILFCYGQLLFTL. Residues 236–257 are Cytoplasmic-facing; the sequence is KSAAKAQADSASTQKAEREVTK. A helical membrane pass occupies residues 258–281; it reads MVVVMVMGFLVCWLPYASFALWVV. Topologically, residues 282-289 are extracellular; the sequence is FNRGQSFD. A helical membrane pass occupies residues 290-314; it reads LRLGTIPSCFSKASTVYNPVIYVFM. K301 is subject to N6-(retinylidene)lysine. Residues 315-355 lie on the Cytoplasmic side of the membrane; the sequence is NKQFRSCMMKLIFCGKSPFGDDEEASSSSQVTQVSSVGPEK. Residues 334-355 are disordered; the sequence is GDDEEASSSSQVTQVSSVGPEK. Over residues 340 to 355 the composition is skewed to low complexity; that stretch reads SSSSQVTQVSSVGPEK.

This sequence belongs to the G-protein coupled receptor 1 family. Opsin subfamily. Post-translationally, phosphorylated on some or all of the serine and threonine residues present in the C-terminal region. As to expression, the color pigments are found in the cone photoreceptor cells.

Its subcellular location is the membrane. Its function is as follows. Visual pigments are the light-absorbing molecules that mediate vision. They consist of an apoprotein, opsin, covalently linked to cis-retinal. The sequence is that of Blue-sensitive opsin (B23) from Psalidodon fasciatus (Banded astyanax).